A 233-amino-acid chain; its full sequence is Small ribosomal subunit protein eS4 (233 aa).

Positions 37–99 (VPLVVVLRDV…RDEYYRVFPD (63 aa)) constitute an S4 RNA-binding domain.

Belongs to the eukaryotic ribosomal protein eS4 family.

The polypeptide is Small ribosomal subunit protein eS4 (Halobacterium salinarum (strain ATCC 29341 / DSM 671 / R1)).